The chain runs to 442 residues: tRNA modification GTPase MnmE (442 aa).

The (6S)-5-formyl-5,6,7,8-tetrahydrofolate site is built by Arg27, Glu84, and Lys124. The TrmE-type G domain maps to 221–366 (GLHVVIVGAP…LLTNLQNFAE (146 aa)). Residues 231 to 236 (NAGKSS), 250 to 256 (SEEAGTT), and 275 to 278 (DTAG) each bind GTP. Positions 235 and 256 each coordinate Mg(2+). A (6S)-5-formyl-5,6,7,8-tetrahydrofolate-binding site is contributed by Lys442.

This sequence belongs to the TRAFAC class TrmE-Era-EngA-EngB-Septin-like GTPase superfamily. TrmE GTPase family. In terms of assembly, homodimer. Heterotetramer of two MnmE and two MnmG subunits. The cofactor is K(+).

Its subcellular location is the cytoplasm. Functionally, exhibits a very high intrinsic GTPase hydrolysis rate. Involved in the addition of a carboxymethylaminomethyl (cmnm) group at the wobble position (U34) of certain tRNAs, forming tRNA-cmnm(5)s(2)U34. In Brucella anthropi (strain ATCC 49188 / DSM 6882 / CCUG 24695 / JCM 21032 / LMG 3331 / NBRC 15819 / NCTC 12168 / Alc 37) (Ochrobactrum anthropi), this protein is tRNA modification GTPase MnmE.